An 86-amino-acid chain; its full sequence is Putative antitoxin VapB5 (86 aa).

It belongs to the phD/YefM antitoxin family. As to quaternary structure, forms a complex with VapC5.

Its function is as follows. Probable antitoxin component of a probable type II toxin-antitoxin (TA) system. The cognate toxin is VapC5. The polypeptide is Putative antitoxin VapB5 (vapB5) (Mycobacterium tuberculosis (strain CDC 1551 / Oshkosh)).